Here is a 344-residue protein sequence, read N- to C-terminus: Anamorsin homolog 1 (344 aa).

Residues 1–169 (MANNVGVLLA…DTGSVFQIRK (169 aa)) are N-terminal SAM-like domain. Residues 170-233 (KVSNQNGNFR…EDDLLTEEDL (64 aa)) form a linker region. Residues Cys244, Cys251, Cys254, and Cys256 each coordinate [2Fe-2S] cluster. Residues 244 to 256 (CAPTKKACKNCTC) form a fe-S binding site A region. [4Fe-4S] cluster-binding residues include Cys282, Cys285, Cys293, and Cys296. 2 consecutive short sequence motifs (cx2C motif) follow at residues 282–285 (CGSC) and 293–296 (CAGC). A fe-S binding site B region spans residues 282 to 296 (CGSCGLGDAFRCAGC).

Belongs to the anamorsin family. In terms of assembly, monomer. [2Fe-2S] cluster serves as cofactor. It depends on [4Fe-4S] cluster as a cofactor.

The protein localises to the cytoplasm. The protein resides in the mitochondrion intermembrane space. Component of the cytosolic iron-sulfur (Fe-S) protein assembly (CIA) machinery. Required for the maturation of extramitochondrial Fe-S proteins. Part of an electron transfer chain functioning in an early step of cytosolic Fe-S biogenesis, facilitating the de novo assembly of a [4Fe-4S] cluster on the cytosolic Fe-S scaffold complex. Electrons are transferred from NADPH via a FAD- and FMN-containing diflavin oxidoreductase. Together with the diflavin oxidoreductase, also required for the assembly of the diferric tyrosyl radical cofactor of ribonucleotide reductase (RNR), probably by providing electrons for reduction during radical cofactor maturation in the catalytic small subunit. This is Anamorsin homolog 1 from Physcomitrium patens (Spreading-leaved earth moss).